The following is a 205-amino-acid chain: Ribonuclease HII (205 aa).

Residues 16 to 205 (VSEVGIDEVG…KSFLKKSKLI (190 aa)) enclose the RNase H type-2 domain. D22, E23, and D118 together coordinate a divalent metal cation.

The protein belongs to the RNase HII family. It depends on Mn(2+) as a cofactor. Mg(2+) is required as a cofactor.

The protein resides in the cytoplasm. The catalysed reaction is Endonucleolytic cleavage to 5'-phosphomonoester.. In terms of biological role, endonuclease that specifically degrades the RNA of RNA-DNA hybrids. In Prochlorococcus marinus (strain AS9601), this protein is Ribonuclease HII.